Reading from the N-terminus, the 317-residue chain is Malate dehydrogenase (317 aa).

NAD(+) is bound by residues 10–15 (GGGQIG) and Asp-34. Arg-83 and Arg-89 together coordinate substrate. NAD(+) is bound by residues Asn-96 and 119–121 (ISN). Substrate is bound by residues Asn-121 and Arg-152. His-176 acts as the Proton acceptor in catalysis.

This sequence belongs to the LDH/MDH superfamily. MDH type 3 family.

The enzyme catalyses (S)-malate + NAD(+) = oxaloacetate + NADH + H(+). Catalyzes the reversible oxidation of malate to oxaloacetate. This Geobacter sulfurreducens (strain ATCC 51573 / DSM 12127 / PCA) protein is Malate dehydrogenase.